A 151-amino-acid polypeptide reads, in one-letter code: Putative pre-16S rRNA nuclease (151 aa).

Belongs to the YqgF nuclease family.

The protein localises to the cytoplasm. Its function is as follows. Could be a nuclease involved in processing of the 5'-end of pre-16S rRNA. In Prochlorococcus marinus subsp. pastoris (strain CCMP1986 / NIES-2087 / MED4), this protein is Putative pre-16S rRNA nuclease.